A 570-amino-acid polypeptide reads, in one-letter code: Periplasmic trehalase (570 aa).

The first 34 residues, 1–34, serve as a signal peptide directing secretion; that stretch reads MIPPEIRRSVLLQKAIKLALAGTLLTFASFSATA. Substrate contacts are provided by residues Arg159, 166–167, Asn203, 212–214, 284–286, and Gly317; these read WD, RSQ, and RPE. Catalysis depends on proton donor/acceptor residues Asp319 and Glu503. Glu518 contacts substrate. A disordered region spans residues 544–570; it reads KPCDSVPSTRPASLSATPTKTPSAATQ. Over residues 554–570 the composition is skewed to low complexity; the sequence is PASLSATPTKTPSAATQ.

The protein belongs to the glycosyl hydrolase 37 family. As to quaternary structure, monomer.

It is found in the periplasm. The catalysed reaction is alpha,alpha-trehalose + H2O = alpha-D-glucose + beta-D-glucose. Functionally, provides the cells with the ability to utilize trehalose at high osmolarity by splitting it into glucose molecules that can subsequently be taken up by the phosphotransferase-mediated uptake system. This is Periplasmic trehalase from Salmonella paratyphi A (strain AKU_12601).